The following is a 369-amino-acid chain: Glycolate oxidase 1 (369 aa).

Positions 1 to 360 (MGEITNVMEY…TRAHIYTDAD (360 aa)) constitute an FMN hydroxy acid dehydrogenase domain. Residue Y25 participates in glyoxylate binding. FMN is bound by residues 78–80 (PSA), S107, 128–130 (QLY), and T156. Residue Y130 participates in glyoxylate binding. Glyoxylate is bound at residue R165. FMN contacts are provided by K231 and S253. Glyoxylate-binding residues include H255 and R258. The Proton acceptor role is filled by H255. FMN-binding positions include 286 to 290 (DGGVR) and 309 to 310 (GR). Residues 367-369 (PRL) carry the Microbody targeting signal motif.

This sequence belongs to the FMN-dependent alpha-hydroxy acid dehydrogenase family. In terms of assembly, homotetramer. Interacts with rice dwarf virus (RDV) P8. This interaction promotes viral P8 relocation to virus factories peripheral to peroxisomes. Requires FMN as cofactor.

Its subcellular location is the peroxisome. It carries out the reaction glycolate + O2 = glyoxylate + H2O2. It functions in the pathway photosynthesis; photorespiration; glycine from 2-phosphoglycolate: step 2/3. Functionally, catalyzes the oxidation of glycolate to glyoxylate, with a reduction of O2 to H2O2. Is a key enzyme in photorespiration in plants. Can exert a strong regulation over photosynthesis, possibly through a feed-back inhibition on Rubisco activase. Does not seem to play a role in oxalate accumulation. In Oryza sativa subsp. indica (Rice), this protein is Glycolate oxidase 1 (GLO1).